The chain runs to 932 residues: Protein translocase subunit SecA (932 aa).

ATP contacts are provided by residues Q87, 105 to 109, and D515; that span reads GEGKT. Residues C916, C918, C927, and H928 each coordinate Zn(2+).

Belongs to the SecA family. Monomer and homodimer. Part of the essential Sec protein translocation apparatus which comprises SecA, SecYEG and auxiliary proteins SecDF-YajC and YidC. Zn(2+) is required as a cofactor.

It is found in the cell inner membrane. Its subcellular location is the cytoplasm. It catalyses the reaction ATP + H2O + cellular proteinSide 1 = ADP + phosphate + cellular proteinSide 2.. Its function is as follows. Part of the Sec protein translocase complex. Interacts with the SecYEG preprotein conducting channel. Has a central role in coupling the hydrolysis of ATP to the transfer of proteins into and across the cell membrane, serving both as a receptor for the preprotein-SecB complex and as an ATP-driven molecular motor driving the stepwise translocation of polypeptide chains across the membrane. The protein is Protein translocase subunit SecA of Burkholderia orbicola (strain AU 1054).